A 2073-amino-acid polypeptide reads, in one-letter code: Dedicator of cytokinesis protein 11 (2073 aa).

The residue at position 12 (S12) is a Phosphoserine. T16 is modified (phosphothreonine). Phosphoserine is present on residues S23 and S161. Residues G165 to Q272 form the PH domain. The residue at position 248 (Y248) is a Phosphotyrosine. Residues S306 and S445 each carry the phosphoserine modification. The 179-residue stretch at K640 to E818 folds into the C2 DOCK-type domain. The disordered stretch occupies residues Q1227–S1267. Phosphoserine is present on residues S1237 and S1240. Low complexity predominate over residues S1254–S1267. A DOCKER domain is found at K1609–L2036.

Belongs to the DOCK family. In terms of assembly, interacts with CDC42. In terms of tissue distribution, expressed in spleen, thymus, mesenteric lymph nodes (MLN), bone marrow and peripheral blood lymphocytes. Enriched in B-cells from germinal centers. Expressed in B-, T- and dendritic cells as well as Purkinje cells.

Guanine nucleotide-exchange factor (GEF) that activates CDC42 by exchanging bound GDP for free GTP. Required for marginal zone (MZ) B-cell development, is associated with early bone marrow B-cell development, MZ B-cell formation, MZ B-cell number and marginal metallophilic macrophages morphology. Facilitates filopodia formation through the activation of CDC42. The protein is Dedicator of cytokinesis protein 11 of Mus musculus (Mouse).